The following is a 303-amino-acid chain: Methionyl-tRNA formyltransferase (303 aa).

111–114 is a binding site for (6S)-5,6,7,8-tetrahydrofolate; it reads SLLP.

It belongs to the Fmt family.

The catalysed reaction is L-methionyl-tRNA(fMet) + (6R)-10-formyltetrahydrofolate = N-formyl-L-methionyl-tRNA(fMet) + (6S)-5,6,7,8-tetrahydrofolate + H(+). Functionally, attaches a formyl group to the free amino group of methionyl-tRNA(fMet). The formyl group appears to play a dual role in the initiator identity of N-formylmethionyl-tRNA by promoting its recognition by IF2 and preventing the misappropriation of this tRNA by the elongation apparatus. The sequence is that of Methionyl-tRNA formyltransferase from Ehrlichia chaffeensis (strain ATCC CRL-10679 / Arkansas).